We begin with the raw amino-acid sequence, 570 residues long: Sulfite reductase [NADPH] hemoprotein beta-component (570 aa).

4 residues coordinate [4Fe-4S] cluster: Cys-434, Cys-440, Cys-479, and Cys-483. Cys-483 contacts siroheme.

Belongs to the nitrite and sulfite reductase 4Fe-4S domain family. Alpha(8)-beta(8). The alpha component is a flavoprotein, the beta component is a hemoprotein. Siroheme is required as a cofactor. It depends on [4Fe-4S] cluster as a cofactor.

The enzyme catalyses hydrogen sulfide + 3 NADP(+) + 3 H2O = sulfite + 3 NADPH + 4 H(+). The protein operates within sulfur metabolism; hydrogen sulfide biosynthesis; hydrogen sulfide from sulfite (NADPH route): step 1/1. Functionally, component of the sulfite reductase complex that catalyzes the 6-electron reduction of sulfite to sulfide. This is one of several activities required for the biosynthesis of L-cysteine from sulfate. The protein is Sulfite reductase [NADPH] hemoprotein beta-component of Escherichia coli O6:H1 (strain CFT073 / ATCC 700928 / UPEC).